A 142-amino-acid polypeptide reads, in one-letter code: Ribosome-binding factor A (142 aa).

Positions 119-142 (EAKQKQHGVETDAEQGDTKEEGDK) are disordered.

The protein belongs to the RbfA family. Monomer. Binds 30S ribosomal subunits, but not 50S ribosomal subunits or 70S ribosomes.

Its subcellular location is the cytoplasm. One of several proteins that assist in the late maturation steps of the functional core of the 30S ribosomal subunit. Associates with free 30S ribosomal subunits (but not with 30S subunits that are part of 70S ribosomes or polysomes). Required for efficient processing of 16S rRNA. May interact with the 5'-terminal helix region of 16S rRNA. This chain is Ribosome-binding factor A, found in Shewanella pealeana (strain ATCC 700345 / ANG-SQ1).